The following is a 604-amino-acid chain: Inositol-3-phosphate synthase 1 (604 aa).

NAD(+) contacts are provided by Gly88, Gly89, Asn90, Asn91, Asp163, Ser198, Val199, Gln210, Arg213, Ser251, Gly252, Asn253, Thr254, Ser303, Asp327, Leu328, Thr330, Asn361, Asn362, Asp363, Lys376, Gly456, Asp457, Asp485, and Ser486.

Belongs to the myo-inositol 1-phosphate synthase family. It depends on NAD(+) as a cofactor.

It carries out the reaction D-glucose 6-phosphate = 1D-myo-inositol 3-phosphate. It functions in the pathway polyol metabolism; myo-inositol biosynthesis; myo-inositol from D-glucose 6-phosphate: step 1/2. In terms of biological role, key enzyme in myo-inositol biosynthesis pathway that catalyzes the conversion of glucose 6-phosphate to 1-myo-inositol 1-phosphate in a NAD-dependent manner. Rate-limiting enzyme in the synthesis of all inositol-containing compounds. De novo-synthesized myo-inositol is essential for incorporation into GPI (glycosylphosphatidylinositol) glycolipids during intra-erythrocytic development. The protein is Inositol-3-phosphate synthase 1 of Plasmodium falciparum (isolate 3D7).